The following is a 352-amino-acid chain: [Citrate [pro-3S]-lyase] ligase (352 aa).

The 128-residue stretch at 1-128 (MFGNDIFTRV…VMVLMENSAT (128 aa)) folds into the N-acetyltransferase domain.

The enzyme catalyses holo-[citrate lyase ACP] + acetate + ATP = acetyl-[citrate lyase ACP] + AMP + diphosphate. Its function is as follows. Acetylation of prosthetic group (2-(5''-phosphoribosyl)-3'-dephosphocoenzyme-A) of the gamma subunit of citrate lyase. The polypeptide is [Citrate [pro-3S]-lyase] ligase (citC) (Escherichia coli (strain K12)).